Consider the following 144-residue polypeptide: 3-dehydroquinate dehydratase (144 aa).

The Proton acceptor role is filled by tyrosine 24. 3 residues coordinate substrate: asparagine 76, histidine 82, and aspartate 89. Histidine 102 functions as the Proton donor in the catalytic mechanism. Substrate contacts are provided by residues 103 to 104 (LS) and arginine 113.

Belongs to the type-II 3-dehydroquinase family. In terms of assembly, homododecamer.

It carries out the reaction 3-dehydroquinate = 3-dehydroshikimate + H2O. It participates in metabolic intermediate biosynthesis; chorismate biosynthesis; chorismate from D-erythrose 4-phosphate and phosphoenolpyruvate: step 3/7. In terms of biological role, catalyzes a trans-dehydration via an enolate intermediate. The chain is 3-dehydroquinate dehydratase from Bordetella avium (strain 197N).